Here is a 154-residue protein sequence, read N- to C-terminus: Transcriptional repressor NrdR (154 aa).

Residues 1 to 22 (MECPNCHKNASRVIDSRPSDEN) are disordered. Residues 3–34 (CPNCHKNASRVIDSRPSDENRAIRRRRECENC) fold into a zinc finger. Positions 49 to 139 (LLVVKNDGTR…IYRQFKDVSG (91 aa)) constitute an ATP-cone domain.

It belongs to the NrdR family. The cofactor is Zn(2+).

Negatively regulates transcription of bacterial ribonucleotide reductase nrd genes and operons by binding to NrdR-boxes. In Lactobacillus johnsonii (strain CNCM I-12250 / La1 / NCC 533), this protein is Transcriptional repressor NrdR.